The sequence spans 176 residues: Ribosome maturation factor RimM (176 aa).

A PRC barrel domain is found at Glu93–Ile166.

The protein belongs to the RimM family. In terms of assembly, binds ribosomal protein uS19.

The protein localises to the cytoplasm. Its function is as follows. An accessory protein needed during the final step in the assembly of 30S ribosomal subunit, possibly for assembly of the head region. Essential for efficient processing of 16S rRNA. May be needed both before and after RbfA during the maturation of 16S rRNA. It has affinity for free ribosomal 30S subunits but not for 70S ribosomes. In Rhodopseudomonas palustris (strain BisA53), this protein is Ribosome maturation factor RimM.